Consider the following 629-residue polypeptide: Ribosomal protein S6 kinase 2 beta (629 aa).

In terms of domain architecture, Protein kinase 1 spans 62 to 321 (FVLLKVLGQG…AEELKRHPFF (260 aa)). Residues 68 to 76 (LGQGSFGKV) and lysine 94 each bind ATP. Catalysis depends on aspartate 187, which acts as the Proton acceptor. A Phosphoserine modification is found at serine 221. Residues 322 to 391 (STIDWNKLYR…VAPVLVEEDA (70 aa)) form the AGC-kinase C-terminal domain. Phosphothreonine is present on threonine 359. Serine 363 bears the Phosphoserine mark. Phosphoserine; by autocatalysis is present on serine 380. The 214-residue stretch at 416-629 (YTVRETIGVG…PEEILARIGS (214 aa)) folds into the Protein kinase 2 domain. ATP contacts are provided by residues 422-430 (IGVGSYSVC) and lysine 445. Aspartate 533 serves as the catalytic Proton acceptor. Threonine 571 carries the phosphothreonine modification.

This sequence belongs to the protein kinase superfamily. AGC Ser/Thr protein kinase family. S6 kinase subfamily. Mg(2+) serves as cofactor. Autophosphorylated on Ser-380, as part of the activation process.

The enzyme catalyses L-seryl-[protein] + ATP = O-phospho-L-seryl-[protein] + ADP + H(+). It carries out the reaction L-threonyl-[protein] + ATP = O-phospho-L-threonyl-[protein] + ADP + H(+). Activated by multiple phosphorylations on threonine and serine residues. Its function is as follows. Serine/threonine kinase that may play a role in mediating the growth-factor and stress induced activation of transcription. The protein is Ribosomal protein S6 kinase 2 beta of Xenopus laevis (African clawed frog).